The following is a 127-amino-acid chain: Small ribosomal subunit protein uS13 (127 aa).

Residues 93–127 (RRGMPVRGQRTRTNARTRRGRRGQAIGIKKKATKK) are disordered.

The protein belongs to the universal ribosomal protein uS13 family. Part of the 30S ribosomal subunit. Forms a loose heterodimer with protein S19. Forms two bridges to the 50S subunit in the 70S ribosome.

Its function is as follows. Located at the top of the head of the 30S subunit, it contacts several helices of the 16S rRNA. In the 70S ribosome it contacts the 23S rRNA (bridge B1a) and protein L5 of the 50S subunit (bridge B1b), connecting the 2 subunits; these bridges are implicated in subunit movement. Contacts the tRNAs in the A and P-sites. The sequence is that of Small ribosomal subunit protein uS13 from Chloroflexus aurantiacus (strain ATCC 29366 / DSM 635 / J-10-fl).